We begin with the raw amino-acid sequence, 228 residues long: Cutinase (228 aa).

The first 16 residues, 1–16, serve as a signal peptide directing secretion; that stretch reads MKFLSIISLAVSLVAA. C49 and C129 are disulfide-bonded. The active-site Nucleophile is the S140. A disulfide bridge connects residues C191 and C198. The active site involves D195. Catalysis depends on H208, which acts as the Proton donor/acceptor.

The protein belongs to the cutinase family. In terms of processing, the 2 disulfide bonds play a critical role in holding the catalytic residues in juxta-position; reduction of the disulfide bridges results in the complete inactivation of the enzyme.

Its subcellular location is the secreted. It carries out the reaction cutin + H2O = cutin monomers.. With respect to regulation, partially inhibited by berberine; higher inhibitory effects are observed with longer chain polyester substrates. In terms of biological role, catalyzes the hydrolysis of complex carboxylic polyesters found in the cell wall of plants. Degrades cutin, a macromolecule that forms the structure of the plant cuticle. Allows pathogenic fungi to penetrate through the cuticular barrier into the host plant during the initial stage of fungal infection. The chain is Cutinase (CUTA) from Colletotrichum truncatum (Anthracnose fungus).